Consider the following 185-residue polypeptide: Crossover junction endodeoxyribonuclease RuvC (185 aa).

Active-site residues include Asp-7, Glu-66, and Asp-137. The Mg(2+) site is built by Asp-7, Glu-66, and Asp-137.

Belongs to the RuvC family. In terms of assembly, homodimer which binds Holliday junction (HJ) DNA. The HJ becomes 2-fold symmetrical on binding to RuvC with unstacked arms; it has a different conformation from HJ DNA in complex with RuvA. In the full resolvosome a probable DNA-RuvA(4)-RuvB(12)-RuvC(2) complex forms which resolves the HJ. It depends on Mg(2+) as a cofactor.

It is found in the cytoplasm. It carries out the reaction Endonucleolytic cleavage at a junction such as a reciprocal single-stranded crossover between two homologous DNA duplexes (Holliday junction).. In terms of biological role, the RuvA-RuvB-RuvC complex processes Holliday junction (HJ) DNA during genetic recombination and DNA repair. Endonuclease that resolves HJ intermediates. Cleaves cruciform DNA by making single-stranded nicks across the HJ at symmetrical positions within the homologous arms, yielding a 5'-phosphate and a 3'-hydroxyl group; requires a central core of homology in the junction. The consensus cleavage sequence is 5'-(A/T)TT(C/G)-3'. Cleavage occurs on the 3'-side of the TT dinucleotide at the point of strand exchange. HJ branch migration catalyzed by RuvA-RuvB allows RuvC to scan DNA until it finds its consensus sequence, where it cleaves and resolves the cruciform DNA. The chain is Crossover junction endodeoxyribonuclease RuvC from Anaeromyxobacter sp. (strain K).